Reading from the N-terminus, the 235-residue chain is Glial cell line-derived neurotrophic factor (235 aa).

The signal sequence occupies residues 1–19; it reads MKLWDILATCLLLLSSVST. Residues 20-87 constitute a propeptide that is removed on maturation; that stretch reads RPLFHKLQPS…DFIEATLGRL (68 aa). Disordered regions lie at residues 34 to 60 and 91 to 137; these read VRSESPALDPIIDSQPETSNPKQASME and SDVE…RVKG. Over residues 119 to 128 the composition is skewed to basic residues; that stretch reads GERKRSRGRA. Intrachain disulfides connect Cys-142–Cys-203, Cys-169–Cys-232, and Cys-173–Cys-234. Asn-150 and Asn-186 each carry an N-linked (GlcNAc...) asparagine glycan.

Belongs to the TGF-beta family. GDNF subfamily. Homodimer; disulfide-linked. Interacts with GFRA1 coreceptor and RET: forms a 2:2:2 ternary complex composed of GDNF ligand, GFRA1 and RET receptor. As to expression, first expressed at 14 hours post-fertilization (hpf) in the ventral half of anterior somites and in intermediate mesoderm. Ventral somitic expression persists and extends more posteriorly over the next 12 hours. Expressed throughout the ventral trunk mesoderm and endoderm at 24 hpf. By 30 hpf, somitic expression ceases and by 36 hpf, expression becomes restricted to the endodermal cells forming the gut, with expression along the whole length of the developing gut tube at 72 hpf.

It is found in the secreted. In terms of biological role, neurotrophic factor that enhances survival and morphological differentiation of dopaminergic neurons and increases their high-affinity dopamine uptake. Acts by binding to its coreceptor, GFRA1, leading to autophosphorylation and activation of the RET receptor. This is Glial cell line-derived neurotrophic factor from Danio rerio (Zebrafish).